Consider the following 239-residue polypeptide: Hydroxyacylglutathione hydrolase (239 aa).

Zn(2+) contacts are provided by His-54, His-56, Asp-58, His-59, His-112, Asp-131, and His-169.

This sequence belongs to the metallo-beta-lactamase superfamily. Glyoxalase II family. Monomer. Zn(2+) serves as cofactor.

It catalyses the reaction an S-(2-hydroxyacyl)glutathione + H2O = a 2-hydroxy carboxylate + glutathione + H(+). It functions in the pathway secondary metabolite metabolism; methylglyoxal degradation; (R)-lactate from methylglyoxal: step 2/2. Its function is as follows. Thiolesterase that catalyzes the hydrolysis of S-D-lactoyl-glutathione to form glutathione and D-lactic acid. The protein is Hydroxyacylglutathione hydrolase of Pelagibacter ubique (strain HTCC1062).